The primary structure comprises 460 residues: Nucleosome assembly protein 1-like 2 (460 aa).

Over residues 1 to 11 (MAESVDHKELS) the composition is skewed to basic and acidic residues. Disordered regions lie at residues 1–87 (MAES…DSDR) and 213–238 (DEEE…EDPK). Residues 213-223 (DEEEEEEEDDS) are compositionally biased toward acidic residues. The Nuclear localization signal signature appears at 346 to 352 (IKKKQRH).

This sequence belongs to the nucleosome assembly protein (NAP) family. As to expression, brain, specifically expressed in neurons.

It localises to the nucleus. In terms of biological role, acidic protein which may be involved in interactions with other proteins or DNA. The chain is Nucleosome assembly protein 1-like 2 (Nap1l2) from Mus musculus (Mouse).